The following is a 292-amino-acid chain: 4-amino-L-phenylalanine/4-methylamino-L-phenylalanine methyltransferase (292 aa).

Position 128–132 (128–132 (CAGPG)) interacts with S-adenosyl-L-methionine.

This sequence belongs to the protein N5-glutamine methyltransferase family.

It catalyses the reaction 4-amino-L-phenylalanine + S-adenosyl-L-methionine = 4-methylamino-L-phenylalanine + S-adenosyl-L-homocysteine + H(+). The catalysed reaction is 4-methylamino-L-phenylalanine + S-adenosyl-L-methionine = 4-dimethylamino-L-phenylalanine + S-adenosyl-L-homocysteine + H(+). Its pathway is antibiotic biosynthesis. Its function is as follows. Involved in pristinamycin I biosynthesis. Catalyzes the SAM-dependent methylation of 4-amino-L-phenylalanine (PAPA) to 4-methylamino-L-phenylalanine (MMPAPA), and of MMPAPA to 4-dimethylamino-L-phenylalanine (DMPAPA). The polypeptide is 4-amino-L-phenylalanine/4-methylamino-L-phenylalanine methyltransferase (Streptomyces pristinaespiralis).